A 353-amino-acid polypeptide reads, in one-letter code: Photosystem II protein D1 (353 aa).

Thr2 is subject to N-acetylthreonine. Thr2 is subject to Phosphothreonine. Helical transmembrane passes span 29-46 (YIGWFGVLMIPLLLTATS), 118-133 (HFLLGVACYMGREWEL), and 142-156 (WIAVAYSAPVAAATA). A chlorophyll a-binding site is contributed by His118. Tyr126 contributes to the pheophytin a binding site. Residues Asp170 and Glu189 each coordinate [CaMn4O5] cluster. Residues 197 to 218 (FHMLGVAGVFGGSLFSAMHGSL) form a helical membrane-spanning segment. A chlorophyll a-binding site is contributed by His198. A quinone is bound by residues His215 and 264–265 (SF). His215 contributes to the Fe cation binding site. Residue His272 coordinates Fe cation. A helical transmembrane segment spans residues 274 to 288 (FLAAWPVVCIWFTAL). The [CaMn4O5] cluster site is built by His332, Glu333, Asp342, and Ala344. Residues 345 to 353 (SVDAPAVQG) constitute a propeptide that is removed on maturation.

It belongs to the reaction center PufL/M/PsbA/D family. PSII is composed of 1 copy each of membrane proteins PsbA, PsbB, PsbC, PsbD, PsbE, PsbF, PsbH, PsbI, PsbJ, PsbK, PsbL, PsbM, PsbT, PsbX, PsbY, PsbZ, Psb30/Ycf12, at least 3 peripheral proteins of the oxygen-evolving complex and a large number of cofactors. It forms dimeric complexes. The D1/D2 heterodimer binds P680, chlorophylls that are the primary electron donor of PSII, and subsequent electron acceptors. It shares a non-heme iron and each subunit binds pheophytin, quinone, additional chlorophylls, carotenoids and lipids. D1 provides most of the ligands for the Mn4-Ca-O5 cluster of the oxygen-evolving complex (OEC). There is also a Cl(-1) ion associated with D1 and D2, which is required for oxygen evolution. The PSII complex binds additional chlorophylls, carotenoids and specific lipids. serves as cofactor. Tyr-161 forms a radical intermediate that is referred to as redox-active TyrZ, YZ or Y-Z. In terms of processing, C-terminally processed by CTPA; processing is essential to allow assembly of the oxygen-evolving complex and thus photosynthetic growth.

It is found in the plastid. The protein resides in the chloroplast thylakoid membrane. It catalyses the reaction 2 a plastoquinone + 4 hnu + 2 H2O = 2 a plastoquinol + O2. In terms of biological role, photosystem II (PSII) is a light-driven water:plastoquinone oxidoreductase that uses light energy to abstract electrons from H(2)O, generating O(2) and a proton gradient subsequently used for ATP formation. It consists of a core antenna complex that captures photons, and an electron transfer chain that converts photonic excitation into a charge separation. The D1/D2 (PsbA/PsbD) reaction center heterodimer binds P680, the primary electron donor of PSII as well as several subsequent electron acceptors. This is Photosystem II protein D1 from Nephroselmis olivacea (Green alga).